A 207-amino-acid chain; its full sequence is ATP phosphoribosyltransferase (207 aa).

This sequence belongs to the ATP phosphoribosyltransferase family. Short subfamily. In terms of assembly, heteromultimer composed of HisG and HisZ subunits.

It is found in the cytoplasm. The catalysed reaction is 1-(5-phospho-beta-D-ribosyl)-ATP + diphosphate = 5-phospho-alpha-D-ribose 1-diphosphate + ATP. It functions in the pathway amino-acid biosynthesis; L-histidine biosynthesis; L-histidine from 5-phospho-alpha-D-ribose 1-diphosphate: step 1/9. In terms of biological role, catalyzes the condensation of ATP and 5-phosphoribose 1-diphosphate to form N'-(5'-phosphoribosyl)-ATP (PR-ATP). Has a crucial role in the pathway because the rate of histidine biosynthesis seems to be controlled primarily by regulation of HisG enzymatic activity. The chain is ATP phosphoribosyltransferase from Geobacillus kaustophilus (strain HTA426).